The chain runs to 192 residues: Ion-translocating oxidoreductase complex subunit B (192 aa).

Positions 1–26 (MNAIWIAVAAVSLLGLAFGAILGYAS) are hydrophobic. In terms of domain architecture, 4Fe-4S spans 32-91 (EDDPVVEKIDEILPQSQCGQCGYPGCRPYAEAISCNGEKINRCAPGGEAVMLKIAELLNV). The [4Fe-4S] cluster site is built by C49, C52, C57, C74, C117, C120, C123, C127, C147, C150, C153, and C157. 2 4Fe-4S ferredoxin-type domains span residues 108–137 (MVAV…GATR) and 138–167 (AMHT…LQPV).

Belongs to the 4Fe4S bacterial-type ferredoxin family. RnfB subfamily. As to quaternary structure, the complex is composed of six subunits: RsxA, RsxB, RsxC, RsxD, RsxE and RsxG. It depends on [4Fe-4S] cluster as a cofactor.

The protein resides in the cell inner membrane. Its function is as follows. Part of a membrane-bound complex that couples electron transfer with translocation of ions across the membrane. Required to maintain the reduced state of SoxR. The chain is Ion-translocating oxidoreductase complex subunit B from Escherichia coli O127:H6 (strain E2348/69 / EPEC).